We begin with the raw amino-acid sequence, 266 residues long: Mitochondrial genome maintenance protein MGM101 (266 aa).

The transit peptide at 1-23 (MLHSTKLVFRATPQALCFPVRSY) directs the protein to the mitochondrion. Composition is skewed to polar residues over residues 37-47 (KTTSKLAPSIT) and 57-68 (PSLQEPQSATST). A disordered region spans residues 37–68 (KTTSKLAPSITTEDEVAEQDPSLQEPQSATST).

Belongs to the MGM101 family. As to quaternary structure, forms homooligomers in vitro.

It localises to the mitochondrion matrix. The protein localises to the mitochondrion nucleoid. Functionally, plays a role in the replication of the mitochondrial genome and the maintenance of its telomeres. Able to catalyze strand annealing and D-loop formation. Binds a wide variety of DNA substrates. Exhibited the highest affinity for DNA molecules carrying 3' ssDNA overhangs (Y-form, 3' FLAP, 3' overhang) and for substrates with complex structures (X-O and Fork). Forms homogeneous ring-shaped structures at the ssDNA native telomeres ends. Oligomers seem to bind to the ssDNA as a filament until they reach the double-stranded region and induce the formation of bends and loops within the double-stranded part of the molecules. This is Mitochondrial genome maintenance protein MGM101 from Candida parapsilosis (strain CDC 317 / ATCC MYA-4646) (Yeast).